The chain runs to 264 residues: MKAYLDLMRHVLDNGTDKSDRTGTGTRSVFGYQMRFDLGKGFPLLTTKKLHLRSIIHELLWFLKGDTNIKYLKDNNVSIWDEWADENGDLGPVYGYQWRNWPAPDGRHIDQIANVLEQIKKNPDSRRLIVSAWNPALVDEMALPPCHALFQFYVADGKLSCQLYQRSADIFLGVPFNIASYALLTMMMAQVCGLEAGEFVHTFGDAHLYRNHFEQAALQLEREPRALPVMKINPEVKDLFSFKFEDFELEGYDPHPHIKAAVSV.

Residue Arg-21 participates in dUMP binding. Position 51 (His-51) interacts with (6R)-5,10-methylene-5,6,7,8-tetrahydrofolate. 126–127 (RR) is a dUMP binding site. Cys-146 serves as the catalytic Nucleophile. DUMP-binding positions include 166 to 169 (RSAD), Asn-177, and 207 to 209 (HLY). Residue Asp-169 coordinates (6R)-5,10-methylene-5,6,7,8-tetrahydrofolate. Position 263 (Ser-263) interacts with (6R)-5,10-methylene-5,6,7,8-tetrahydrofolate.

It belongs to the thymidylate synthase family. Bacterial-type ThyA subfamily. As to quaternary structure, homodimer.

The protein localises to the cytoplasm. The catalysed reaction is dUMP + (6R)-5,10-methylene-5,6,7,8-tetrahydrofolate = 7,8-dihydrofolate + dTMP. The protein operates within pyrimidine metabolism; dTTP biosynthesis. Catalyzes the reductive methylation of 2'-deoxyuridine-5'-monophosphate (dUMP) to 2'-deoxythymidine-5'-monophosphate (dTMP) while utilizing 5,10-methylenetetrahydrofolate (mTHF) as the methyl donor and reductant in the reaction, yielding dihydrofolate (DHF) as a by-product. This enzymatic reaction provides an intracellular de novo source of dTMP, an essential precursor for DNA biosynthesis. The polypeptide is Thymidylate synthase (Neisseria meningitidis serogroup B (strain ATCC BAA-335 / MC58)).